The following is a 206-amino-acid chain: Small ribosomal subunit protein uS4 (206 aa).

Residues serine 96–glutamate 157 form the S4 RNA-binding domain.

This sequence belongs to the universal ribosomal protein uS4 family. As to quaternary structure, part of the 30S ribosomal subunit. Contacts protein S5. The interaction surface between S4 and S5 is involved in control of translational fidelity.

In terms of biological role, one of the primary rRNA binding proteins, it binds directly to 16S rRNA where it nucleates assembly of the body of the 30S subunit. Functionally, with S5 and S12 plays an important role in translational accuracy. In Neisseria gonorrhoeae (strain ATCC 700825 / FA 1090), this protein is Small ribosomal subunit protein uS4.